The chain runs to 278 residues: Deoxyuridine 5'-triphosphate nucleotidohydrolase (278 aa).

Residues 171–173 (RSG) and 273–274 (FG) each bind substrate.

The protein belongs to the dUTPase family. It depends on Mg(2+) as a cofactor.

It catalyses the reaction dUTP + H2O = dUMP + diphosphate + H(+). Involved in nucleotide metabolism: produces dUMP, the immediate precursor of thymidine nucleotides and decreases the intracellular concentration of dUTP to avoid uracil incorporation into viral DNA. This Homo sapiens (Human) protein is Deoxyuridine 5'-triphosphate nucleotidohydrolase.